The primary structure comprises 110 residues: UPF0060 membrane protein Pcryo_1341 (110 aa).

The next 4 membrane-spanning stretches (helical) occupy residues 7–27, 33–53, 63–83, and 87–107; these read VGLFAITALAEIVGCYLPYLW, SIWLLVPSALSLVAFVWLLTL, AAYGGVYVTMAILWLWAVDGI, and TWDILGTSVALLGMAIIMFAP.

The protein belongs to the UPF0060 family.

It is found in the cell inner membrane. This is UPF0060 membrane protein Pcryo_1341 from Psychrobacter cryohalolentis (strain ATCC BAA-1226 / DSM 17306 / VKM B-2378 / K5).